Reading from the N-terminus, the 257-residue chain is tRNA (guanine-N(1)-)-methyltransferase (257 aa).

S-adenosyl-L-methionine-binding positions include Gly-117 and 137–142 (LGDFVL).

Belongs to the RNA methyltransferase TrmD family. As to quaternary structure, homodimer.

The protein localises to the cytoplasm. It carries out the reaction guanosine(37) in tRNA + S-adenosyl-L-methionine = N(1)-methylguanosine(37) in tRNA + S-adenosyl-L-homocysteine + H(+). Functionally, specifically methylates guanosine-37 in various tRNAs. This is tRNA (guanine-N(1)-)-methyltransferase from Bordetella pertussis (strain Tohama I / ATCC BAA-589 / NCTC 13251).